Consider the following 861-residue polypeptide: MNKAISDFTAHTPMMQQYWKLKNQHPDQLMFYRMGDFYEIFYEDAKKAAKLLDITLTARGQSAGQSIPMCGIPFHSLEGYLAKLVKLGESVVICEQIGDPATSKGPVERQVVRIITPGTVSDEALLDERRDNLIAALLGDERLFGLAVLDITSGNFSVQEIKGWENLLAELERLNPVELLIPDDWPRDLPAEKRPGARRRAPWDFDRDSARKALCQQFATKDLKGFGCDKLTLAIGAAGCLLTYAKETQRTALPHLRSLRHERLDDTVILDGASRRNLELDINLAGGRDNTLQSVIDRCQTAMASRLLSRWLNRPLRDLKVLQARQDSIRCLLDSYRFEKLQPQLKEIGDIERILARIGLRNARPRDLARLRDALGALPELQNAMTELEAPHLARLAAITGTYPELASLLERAIIDNPPAVIRDGGVLKAGYDNELDDLLAISENAGQFLIDLEAREKARTGLANLKVGYNRVHGYFIELPTKQAEQAPGDYIRRQTLKGAERFITPELKAFEDKALSAKSRALAREKMLYDALLETLISHLAPLQDSAAALAELDVLSNLAERALNLDLNCPRFVDEPCLRIVQGRHPVVEQVLTTPFVANDLGLDNSTRMLIITGPNMGGKSTYMRQTALIVLLAHIGSFVPAASCELSLVDRIFTRIGSSDDLAGGRSTFMVEMSETANILHNATDRSLVLMDEVGRGTSTFDGLSLAWAAAERLAQLRAYTLFATHYFELTVLPESEPLVANVHLNATEHNERIVFLHHVLPGPASQSYGLAVAQLAGVPTVVIQRAREHLGRLETTSLPHEQPPAAKAKDAPQVPHQSDLFASLPHPAIEKLGKLQLDDMTPRQAIEMLYQLKNLL.

617–624 (GPNMGGKS) is an ATP binding site. Residues 799 to 822 (ETTSLPHEQPPAAKAKDAPQVPHQ) form a disordered region. Low complexity predominate over residues 808 to 820 (PPAAKAKDAPQVP).

This sequence belongs to the DNA mismatch repair MutS family.

Its function is as follows. This protein is involved in the repair of mismatches in DNA. It is possible that it carries out the mismatch recognition step. This protein has a weak ATPase activity. The chain is DNA mismatch repair protein MutS from Pseudomonas putida (strain GB-1).